The following is a 295-amino-acid chain: MKQKFKRAILYARQHRANQEVNESLHRLVDFLSTQDIEIFQDSDTAASFELKAPVLPREKMGAKHDLIIVVGGDGSLLSASRMAIKVNTPVIGINRGRLGFLTDILPQDIESHLGPVLNGQYNEEERFLLHTKIYDKENSYFEGDALNDVVLGRGSETHLIEFDVYINQQLVSHYRSDGMILSTPTGSTAYALSAGGPIMHPQLNAIVLVPMFSHSLSSRPLVIDGEAEIELYISKSNETDLRISCDGHESRVVKPGQKVAVKKNGNRLRLLHPLDYHYYDTLRSKLGWESKHQG.

Aspartate 74 (proton acceptor) is an active-site residue. NAD(+) is bound by residues 74–75 (DG), 148–149 (ND), histidine 159, arginine 176, aspartate 178, and 189–194 (TAYALS).

Belongs to the NAD kinase family. It depends on a divalent metal cation as a cofactor.

Its subcellular location is the cytoplasm. It catalyses the reaction NAD(+) + ATP = ADP + NADP(+) + H(+). Functionally, involved in the regulation of the intracellular balance of NAD and NADP, and is a key enzyme in the biosynthesis of NADP. Catalyzes specifically the phosphorylation on 2'-hydroxyl of the adenosine moiety of NAD to yield NADP. This chain is NAD kinase, found in Legionella pneumophila (strain Paris).